The following is a 970-amino-acid chain: Pentatricopeptide repeat-containing protein At1g18485 (970 aa).

19 PPR repeats span residues 119–149 (DDVLCTRIITMYAMCGSPDDSRFVFDALRSK), 150–185 (NLFQWNAVISSYSRNELYDEVLETFIEMISTTDLLP), 186–220 (DHFTYPCVIKACAGMSDVGIGLAVHGLVVKTGLVE), 221–251 (DVFVGNALVSFYGTHGFVTDALQLFDIMPER), 252–282 (NLVSWNSMIRVFSDNGFSEESFLLLGEMMEE), 291–325 (DVATLVTVLPVCAREREIGLGKGVHGWAVKLRLDK), 326–356 (ELVLNNALMDMYSKCGCITNAQMIFKMNNNK), 357–391 (NVVSWNTMVGGFSAEGDTHGTFDVLRQMLAGGEDV), 394–428 (DEVTILNAVPVCFHESFLPSLKELHCYSLKQEFVY), 429–459 (NELVANAFVASYAKCGSLSYAQRVFHGIRSK), 460–494 (TVNSWNALIGGHAQSNDPRLSLDAHLQMKISGLLP), 495–529 (DSFTVCSLLSACSKLKSLRLGKEVHGFIIRNWLER), 530–560 (DLFVYLSVLSLYIHCGELCTVQALFDAMEDK), 561–595 (SLVSWNTVITGYLQNGFPDRALGVFRQMVLYGIQL), 597–630 (GISMMPVFGACSLLPSLRLGREAHAYALKHLLED), 631–661 (DAFIACSLIDMYAKNGSITQSSKVFNGLKEK), 662–696 (STASWNAMIMGYGIHGLAKEAIKLFEEMQRTGHNP), 697–727 (DDLTFLGVLTACNHSGLIHEGLRYLDQMKSS), and 733–764 (NLKHYACVIDMLGRAGQLDKALRVVAEEMSEE). Residues 770-845 (WKSLLSSCRI…AGCSWIELNR (76 aa)) are type E motif. The segment at 846–875 (KVFSFVVGERFLDGFEEIKSLWSILEMKIS) is type E(+) motif. Residues 876 to 970 (KMGYRPDTMS…NGVCSCGDYW (95 aa)) are type DYW motif.

The protein belongs to the PPR family. PCMP-H subfamily.

This Arabidopsis thaliana (Mouse-ear cress) protein is Pentatricopeptide repeat-containing protein At1g18485 (PCMP-H8).